We begin with the raw amino-acid sequence, 466 residues long: UDP-N-acetylmuramoylalanine--D-glutamate ligase (466 aa).

An ATP-binding site is contributed by 121–127 (GTNGKST).

Belongs to the MurCDEF family.

Its subcellular location is the cytoplasm. The catalysed reaction is UDP-N-acetyl-alpha-D-muramoyl-L-alanine + D-glutamate + ATP = UDP-N-acetyl-alpha-D-muramoyl-L-alanyl-D-glutamate + ADP + phosphate + H(+). It functions in the pathway cell wall biogenesis; peptidoglycan biosynthesis. In terms of biological role, cell wall formation. Catalyzes the addition of glutamate to the nucleotide precursor UDP-N-acetylmuramoyl-L-alanine (UMA). This Bradyrhizobium diazoefficiens (strain JCM 10833 / BCRC 13528 / IAM 13628 / NBRC 14792 / USDA 110) protein is UDP-N-acetylmuramoylalanine--D-glutamate ligase.